Reading from the N-terminus, the 94-residue chain is Large ribosomal subunit protein uL23 (94 aa).

The protein belongs to the universal ribosomal protein uL23 family. Part of the 50S ribosomal subunit. Contacts protein L29, and trigger factor when it is bound to the ribosome.

Functionally, one of the early assembly proteins it binds 23S rRNA. One of the proteins that surrounds the polypeptide exit tunnel on the outside of the ribosome. Forms the main docking site for trigger factor binding to the ribosome. In Treponema pallidum (strain Nichols), this protein is Large ribosomal subunit protein uL23.